A 150-amino-acid chain; its full sequence is uncharacterized protein (150 aa).

Residues 4 to 148 (LILYKSIHHK…KAKEFAKSIL (145 aa)) form the Flavodoxin-like domain.

This is an uncharacterized protein from Methanocaldococcus jannaschii (strain ATCC 43067 / DSM 2661 / JAL-1 / JCM 10045 / NBRC 100440) (Methanococcus jannaschii).